The primary structure comprises 864 residues: DNA mismatch repair protein MutS (864 aa).

ATP is bound at residue 607 to 614 (GPNMGGKS).

It belongs to the DNA mismatch repair MutS family.

Its function is as follows. This protein is involved in the repair of mismatches in DNA. It is possible that it carries out the mismatch recognition step. This protein has a weak ATPase activity. This chain is DNA mismatch repair protein MutS, found in Neisseria meningitidis serogroup A / serotype 4A (strain DSM 15465 / Z2491).